The chain runs to 203 residues: Transmembrane emp24 domain-containing protein (203 aa).

Positions M1 to C22 are cleaved as a signal peptide. The Lumenal segment spans residues Y23–R170. Positions E32 to I114 constitute a GOLD domain. The helical transmembrane segment at V171–Y191 threads the bilayer. Residues Y192–V203 are Cytoplasmic-facing.

It belongs to the EMP24/GP25L family.

Its subcellular location is the cytoplasmic vesicle membrane. In terms of biological role, could have a role in the budding of coatomer-coated and other species of coated vesicles. The protein is Transmembrane emp24 domain-containing protein of Nematostella vectensis (Starlet sea anemone).